The following is a 272-amino-acid chain: S-adenosylmethionine decarboxylase proenzyme (272 aa).

The active-site Schiff-base intermediate with substrate; via pyruvic acid is the serine 117. Serine 117 carries the post-translational modification Pyruvic acid (Ser); by autocatalysis. Histidine 122 acts as the Proton acceptor; for processing activity in catalysis. Cysteine 145 functions as the Proton donor; for catalytic activity in the catalytic mechanism.

It belongs to the prokaryotic AdoMetDC family. Type 2 subfamily. Heterooctamer of four alpha and four beta chains arranged as a tetramer of alpha/beta heterodimers. Pyruvate is required as a cofactor. In terms of processing, is synthesized initially as an inactive proenzyme. Formation of the active enzyme involves a self-maturation process in which the active site pyruvoyl group is generated from an internal serine residue via an autocatalytic post-translational modification. Two non-identical subunits are generated from the proenzyme in this reaction, and the pyruvate is formed at the N-terminus of the alpha chain, which is derived from the carboxyl end of the proenzyme. The post-translation cleavage follows an unusual pathway, termed non-hydrolytic serinolysis, in which the side chain hydroxyl group of the serine supplies its oxygen atom to form the C-terminus of the beta chain, while the remainder of the serine residue undergoes an oxidative deamination to produce ammonia and the pyruvoyl group blocking the N-terminus of the alpha chain.

It catalyses the reaction S-adenosyl-L-methionine + H(+) = S-adenosyl 3-(methylsulfanyl)propylamine + CO2. It functions in the pathway amine and polyamine biosynthesis; S-adenosylmethioninamine biosynthesis; S-adenosylmethioninamine from S-adenosyl-L-methionine: step 1/1. Catalyzes the decarboxylation of S-adenosylmethionine to S-adenosylmethioninamine (dcAdoMet), the propylamine donor required for the synthesis of the polyamines spermine and spermidine from the diamine putrescine. This is S-adenosylmethionine decarboxylase proenzyme from Halorhodospira halophila (strain DSM 244 / SL1) (Ectothiorhodospira halophila (strain DSM 244 / SL1)).